The sequence spans 842 residues: Protein P (842 aa).

Residues 1–177 form a terminal protein domain (TP) region; that stretch reads MPLSYQHFRK…FCGSPYSWEQ (177 aa). Positions 178–346 are spacer; sequence ELQHGRLVFQ…YCLTHIVNLL (169 aa). The tract at residues 218–274 is disordered; it reads LKQSRLGLQPQQGSLARGKSGRSGSIRARVPPTTRRSFGVEPSGSGHIDNRASSTSS. Positions 347-690 are polymerase/reverse transcriptase domain (RT); that stretch reads EDWGPCTEHG…YLHLYPVARR (344 aa). In terms of domain architecture, Reverse transcriptase spans 357 to 600; sequence EHNIRIPRTP…YSLNFMGYVI (244 aa). The Mg(2+) site is built by aspartate 429, aspartate 551, and aspartate 552.

The protein belongs to the hepadnaviridae P protein family.

The catalysed reaction is DNA(n) + a 2'-deoxyribonucleoside 5'-triphosphate = DNA(n+1) + diphosphate. The enzyme catalyses Endonucleolytic cleavage to 5'-phosphomonoester.. Its activity is regulated as follows. Activated by host HSP70 and HSP40 in vitro to be able to bind the epsilon loop of the pgRNA. Because deletion of the RNase H region renders the protein partly chaperone-independent, the chaperones may be needed indirectly to relieve occlusion of the RNA-binding site by this domain. Inhibited by several reverse-transcriptase inhibitors: Lamivudine, Adefovir and Entecavir. Functionally, multifunctional enzyme that converts the viral RNA genome into dsDNA in viral cytoplasmic capsids. This enzyme displays a DNA polymerase activity that can copy either DNA or RNA templates, and a ribonuclease H (RNase H) activity that cleaves the RNA strand of RNA-DNA heteroduplexes in a partially processive 3'- to 5'-endonucleasic mode. Neo-synthesized pregenomic RNA (pgRNA) are encapsidated together with the P protein, and reverse-transcribed inside the nucleocapsid. Initiation of reverse-transcription occurs first by binding the epsilon loop on the pgRNA genome, and is initiated by protein priming, thereby the 5'-end of (-)DNA is covalently linked to P protein. Partial (+)DNA is synthesized from the (-)DNA template and generates the relaxed circular DNA (RC-DNA) genome. After budding and infection, the RC-DNA migrates in the nucleus, and is converted into a plasmid-like covalently closed circular DNA (cccDNA). The activity of P protein does not seem to be necessary for cccDNA generation, and is presumably released from (+)DNA by host nuclear DNA repair machinery. The chain is Protein P from Hepatitis B virus genotype C subtype adr (isolate Korea/Kim/1989) (HBV-C).